The following is a 426-amino-acid chain: Glutamate-1-semialdehyde 2,1-aminomutase (426 aa).

At K267 the chain carries N6-(pyridoxal phosphate)lysine.

This sequence belongs to the class-III pyridoxal-phosphate-dependent aminotransferase family. HemL subfamily. Homodimer. It depends on pyridoxal 5'-phosphate as a cofactor.

It is found in the cytoplasm. The enzyme catalyses (S)-4-amino-5-oxopentanoate = 5-aminolevulinate. It participates in porphyrin-containing compound metabolism; protoporphyrin-IX biosynthesis; 5-aminolevulinate from L-glutamyl-tRNA(Glu): step 2/2. The polypeptide is Glutamate-1-semialdehyde 2,1-aminomutase (Bdellovibrio bacteriovorus (strain ATCC 15356 / DSM 50701 / NCIMB 9529 / HD100)).